Consider the following 297-residue polypeptide: 4-hydroxy-tetrahydrodipicolinate synthase (297 aa).

Thr-50 serves as a coordination point for pyruvate. Residue Tyr-138 is the Proton donor/acceptor of the active site. Lys-166 serves as the catalytic Schiff-base intermediate with substrate. Ile-208 provides a ligand contact to pyruvate.

The protein belongs to the DapA family. As to quaternary structure, homotetramer; dimer of dimers.

It localises to the cytoplasm. The catalysed reaction is L-aspartate 4-semialdehyde + pyruvate = (2S,4S)-4-hydroxy-2,3,4,5-tetrahydrodipicolinate + H2O + H(+). The protein operates within amino-acid biosynthesis; L-lysine biosynthesis via DAP pathway; (S)-tetrahydrodipicolinate from L-aspartate: step 3/4. Its function is as follows. Catalyzes the condensation of (S)-aspartate-beta-semialdehyde [(S)-ASA] and pyruvate to 4-hydroxy-tetrahydrodipicolinate (HTPA). The polypeptide is 4-hydroxy-tetrahydrodipicolinate synthase (Haemophilus ducreyi (strain 35000HP / ATCC 700724)).